We begin with the raw amino-acid sequence, 403 residues long: Propionate kinase (403 aa).

It belongs to the acetokinase family. PduW subfamily.

Its subcellular location is the cytoplasm. The catalysed reaction is propanoate + ATP = propanoyl phosphate + ADP. It functions in the pathway polyol metabolism; 1,2-propanediol degradation. Its function is as follows. Works with phosphate acetyltransferase (pta) to capture exogenous propionate and regenerate propionyl-CoA during degradation of 1,2-propanediol (1,2-PD). The sequence is that of Propionate kinase from Citrobacter rodentium (strain ICC168) (Citrobacter freundii biotype 4280).